The chain runs to 440 residues: Transposon Ty1-PR2 Gag polyprotein (440 aa).

3 stretches are compositionally biased toward polar residues: residues 1–10, 48–60, and 127–152; these read MESQQLSNYP, TKAN…TPAS, and QSQF…GNTF. Disordered stretches follow at residues 1-93, 126-173, and 352-440; these read MESQ…MMTQ, PQSQ…RPPP, and GSRN…PETY. Residues 153 to 165 are compositionally biased toward low complexity; the sequence is TDSSSADSDMTST. The RNA-binding stretch occupies residues 299-401; it reads NNGIHINNKV…NSKSKTARAH (103 aa). A compositionally biased stretch (low complexity) spans 402-418; it reads NVSTSNNSPSTDNDSIS. Serine 416 is modified (phosphoserine). A compositionally biased stretch (polar residues) spans 419–428; it reads KSTTEPIQLN. Over residues 429–440 the composition is skewed to basic and acidic residues; that stretch reads NKHDLHLRPETY.

In terms of assembly, homotrimer.

It localises to the cytoplasm. In terms of biological role, capsid protein (CA) is the structural component of the virus-like particle (VLP), forming the shell that encapsulates the retrotransposons dimeric RNA genome. The particles are assembled from trimer-clustered units and there are holes in the capsid shells that allow for the diffusion of macromolecules. CA also has nucleocapsid-like chaperone activity, promoting primer tRNA(i)-Met annealing to the multipartite primer-binding site (PBS), dimerization of Ty1 RNA and initiation of reverse transcription. The protein is Transposon Ty1-PR2 Gag polyprotein (TY1A-PR2) of Saccharomyces cerevisiae (strain ATCC 204508 / S288c) (Baker's yeast).